A 346-amino-acid chain; its full sequence is DNA-directed RNA polymerases I and III subunit RPAC1 (346 aa).

A2 is subject to N-acetylalanine.

This sequence belongs to the archaeal Rpo3/eukaryotic RPB3 RNA polymerase subunit family. As to quaternary structure, component of the RNA polymerase I and RNA polymerase III complexes consisting of at least 13 and 17 subunits, respectively. Pol I complex consists of a ten-subunit catalytic core composed of POLR1A/RPA1, POLR1B/RPA2, POLR1C/RPAC1, POLR1D/RPAC2, POLR1H/RPA12, POLR2E/RPABC1, POLR2F/RPABC2, POLR2H/RPABC3, POLR2K/RPABC4 and POLR2L/RPABC5; a mobile stalk subunit POLR1F/RPA43 protruding from the core and additional subunits homologous to general transcription factors POLR1E/RPA49 and POLR1G/RPA34. Part of Pol I pre-initiation complex (PIC), in which Pol I core assembles with RRN3 and promoter-bound UTBF and SL1/TIF-IB complex. Pol III complex consists of a ten-subunit catalytic core composed of POLR3A/RPC1, POLR3B/RPC2, POLR1C/RPAC1, POLR1D/RPAC2, POLR3K/RPC10, POLR2E/RPABC1, POLR2F/RPABC2, POLR2H/RPABC3, POLR2K/RPABC4 and POLR2L/RPABC5; a mobile stalk composed of two subunits POLR3H/RPC8 and CRCP/RPC9, protruding from the core and functioning primarily in transcription initiation; and additional subunits homologous to general transcription factors of the RNA polymerase II machinery, POLR3C/RPC3-POLR3F/RPC6-POLR3G/RPC7 heterotrimer required for transcription initiation and POLR3D/RPC4-POLR3E/RPC5 heterodimer involved in both transcription initiation and termination.

The protein localises to the nucleus. The protein resides in the cytoplasm. It localises to the cytosol. Functionally, DNA-dependent RNA polymerase catalyzes the transcription of DNA into RNA using the four ribonucleoside triphosphates as substrates. Common component of RNA polymerases I and III which synthesize ribosomal RNA precursors and short non-coding RNAs including 5S rRNA, snRNAs, tRNAs and miRNAs, respectively. POLR1C/RPAC1 is part of the polymerase core and may function as a clamp element that moves to open and close the cleft. In Bos taurus (Bovine), this protein is DNA-directed RNA polymerases I and III subunit RPAC1 (POLR1C).